An 894-amino-acid polypeptide reads, in one-letter code: RNA polymerase I-specific transcription initiation factor RRN6 (894 aa).

The interval 803–894 is disordered; the sequence is PPFNLNSQSQ…KKKKRIRGFG (92 aa). 3 stretches are compositionally biased toward polar residues: residues 806–823, 832–849, and 863–880; these read NLNS…QSSG, KTQS…QNLS, and QPPS…PRNS. Basic residues predominate over residues 881 to 894; the sequence is QKAKKKKKRIRGFG.

Component of the core factor (CF) complex, which consists of RRN6, RRN7 and RRN11. The CF heterotrimer may further dimerize to form a hexamer. RRN6 interacts with RRN7, RRN11 and RRN9.

Its subcellular location is the cytoplasm. The protein resides in the nucleus. It localises to the nucleolus. Functionally, acts as a component of the core factor (CF) complex which is essential for the initiation of rDNA transcription by RNA polymerase I. After binding of UAF (upstream activation factor) to an upstream element of the promoter, CF is recruited in a SPT15/TBP-dependent manner to form a preinitiation complex. The polypeptide is RNA polymerase I-specific transcription initiation factor RRN6 (RRN6) (Saccharomyces cerevisiae (strain ATCC 204508 / S288c) (Baker's yeast)).